A 390-amino-acid polypeptide reads, in one-letter code: Probable tRNA sulfurtransferase (390 aa).

The region spanning 60–162 is the THUMP domain; that stretch reads KQIIDDLKEV…YDCAIVYGHK (103 aa). Residues 180–181, 205–206, Arg-264, Gly-286, and Gln-295 each bind ATP; these read LL and TF.

It belongs to the ThiI family.

It is found in the cytoplasm. It carries out the reaction [ThiI sulfur-carrier protein]-S-sulfanyl-L-cysteine + a uridine in tRNA + 2 reduced [2Fe-2S]-[ferredoxin] + ATP + H(+) = [ThiI sulfur-carrier protein]-L-cysteine + a 4-thiouridine in tRNA + 2 oxidized [2Fe-2S]-[ferredoxin] + AMP + diphosphate. The catalysed reaction is [ThiS sulfur-carrier protein]-C-terminal Gly-Gly-AMP + S-sulfanyl-L-cysteinyl-[cysteine desulfurase] + AH2 = [ThiS sulfur-carrier protein]-C-terminal-Gly-aminoethanethioate + L-cysteinyl-[cysteine desulfurase] + A + AMP + 2 H(+). The protein operates within cofactor biosynthesis; thiamine diphosphate biosynthesis. Functionally, catalyzes the ATP-dependent transfer of a sulfur to tRNA to produce 4-thiouridine in position 8 of tRNAs, which functions as a near-UV photosensor. Also catalyzes the transfer of sulfur to the sulfur carrier protein ThiS, forming ThiS-thiocarboxylate. This is a step in the synthesis of thiazole, in the thiamine biosynthesis pathway. The sulfur is donated as persulfide by IscS. The protein is Probable tRNA sulfurtransferase of Ureaplasma parvum serovar 3 (strain ATCC 27815 / 27 / NCTC 11736).